Consider the following 224-residue polypeptide: Menaquinol:cytochrome c reductase cytochrome b subunit (224 aa).

A helical transmembrane segment spans residues 37–57; that stretch reads FSAFVYCFGGLTFFVTVIQIL. Position 42 (Y42) interacts with heme b. Position 43 (C43) interacts with heme c. The heme b site is built by R91, H94, H108, and R111. The next 3 membrane-spanning stretches (helical) occupy residues 96–116, 126–146, and 195–215; these read WGAS…FFQG, WIVG…GYLL, and IHVF…FLMI. 2 residues coordinate heme b: H196 and H211. 2 residues coordinate heme c: R216 and I220. S221 lines the heme b pocket.

It belongs to the cytochrome b family. In terms of assembly, the main subunits of the menaquinol:cytochrome c complex are a Rieske-type iron-sulfur protein (QcrA), a cytochrome b (QcrB) and a cytochrome c (QcrC). Requires heme b as cofactor. The cofactor is heme c.

The protein resides in the cell membrane. Component of the menaquinol:cytochrome c reductase complex. The sequence is that of Menaquinol:cytochrome c reductase cytochrome b subunit (qcrB) from Geobacillus thermodenitrificans.